Here is a 164-residue protein sequence, read N- to C-terminus: Large ribosomal subunit protein uL11 (164 aa).

This sequence belongs to the universal ribosomal protein uL11 family. As to quaternary structure, part of the ribosomal stalk of the 50S ribosomal subunit. Interacts with L10 and the large rRNA to form the base of the stalk. L10 forms an elongated spine to which L12 dimers bind in a sequential fashion forming a multimeric L10(L12)X complex.

Forms part of the ribosomal stalk which helps the ribosome interact with GTP-bound translation factors. This chain is Large ribosomal subunit protein uL11, found in Pyrococcus abyssi (strain GE5 / Orsay).